The sequence spans 88 residues: Putative regulatory protein PCC7424_3427 (88 aa).

The protein belongs to the RemA family.

The chain is Putative regulatory protein PCC7424_3427 from Gloeothece citriformis (strain PCC 7424) (Cyanothece sp. (strain PCC 7424)).